The chain runs to 658 residues: MTQLAIGEATPHGATYDGHGVNFTLFSAHAERVELCVFDSRGNERRYDLPGRRGDVWHGYLAGARPGLRYGYRVHGPWQPAQGHRFNPAKLLLDPYARRVEGELKDHPLLHGGHDEPDYRDNAAVAPKSVVISDHYDWEDDAAPRTPWGKTVIYEAHVKGLTYLHPELPQEIRGTYKALGHPVMVAYFKQLGITALELLPVAQFASEPRLQRMGLTNYWGYNPMAMFALHPAWASSPETALDEFRDAVKALHRAGIEVILDIVLNHSAELDLDGPTFSLRGIDNRSYYWIRDDGDYHNWTGCGNTLNLSHPDVVEYACECLRYWVETCHVDGFRFDLASVMGRTPTFRQDAPLFAAIKACPVLSTVKLIAEPWDIGEGGYQVGNFPPPFAEWNDHFRDAARRFWLPRNLTTGEFACRFAASSDVFKRNGRAPGASVNLLTAHDGFTLRDCVCFNQKHNEANGEENRDGTNSNYSDNHGKEGLGGPLDLMERRRDSIHALLATLLLSQGTPMLLAGDEHGHSQHGNNNAYCQDNALTWLDWQQANRGLTTFTAALIRLRQQIPALTGNSWWEEGDGNVRWLNKNAQPLSADEWQNGPKLMQILLSDRFLIAINATLEVTDIVLPEGEWRAVPPFAGEDNPVITAVWQGPAHGLCVFQRG.

The active-site Nucleophile is aspartate 336. Catalysis depends on glutamate 371, which acts as the Proton donor. The interval 459 to 484 is disordered; sequence EANGEENRDGTNSNYSDNHGKEGLGG.

It belongs to the glycosyl hydrolase 13 family.

It carries out the reaction Hydrolysis of (1-&gt;6)-alpha-D-glucosidic linkages to branches with degrees of polymerization of three or four glucose residues in limit dextrin.. The protein operates within glycan degradation; glycogen degradation. In terms of biological role, removes maltotriose and maltotetraose chains that are attached by 1,6-alpha-linkage to the limit dextrin main chain, generating a debranched limit dextrin. The sequence is that of Glycogen debranching enzyme from Salmonella paratyphi A (strain ATCC 9150 / SARB42).